The primary structure comprises 286 residues: MRATWRGSVTVGLVSFPVRLTPVRQERGVRLHQVHRVDGGRVRHRRVCELCGEELEAADLARGHDSGAGVVLVEDEELAGLRALPSRAVEVVQFSPAGQVDPVLLGRAYYLEPEEPGTGSYSVLREVLERGGLVGIARVPLRGREVVAVVRPRGGVLVLQVLVWAEEVREPDFVVPVAVSGERELGLAASLVGAMTEDFDPAAFPDAYSAGLTRVVADKLAGQRLERQERQRREAGEVRQADETDEAAETEVPEVDIPASRAPGETGGELLAALRRSLERLRGGRR.

The region spanning 10–175 (TVGLVSFPVR…EEVREPDFVV (166 aa)) is the Ku domain. The span at 226–242 (ERQERQRREAGEVRQAD) shows a compositional bias: basic and acidic residues. Residues 226–270 (ERQERQRREAGEVRQADETDEAAETEVPEVDIPASRAPGETGGEL) are disordered. The span at 243–254 (ETDEAAETEVPE) shows a compositional bias: acidic residues.

The protein belongs to the prokaryotic Ku family. As to quaternary structure, homodimer. Interacts with LigD.

In terms of biological role, with LigD forms a non-homologous end joining (NHEJ) DNA repair enzyme, which repairs dsDNA breaks with reduced fidelity. Binds linear dsDNA with 5'- and 3'- overhangs but not closed circular dsDNA nor ssDNA. Recruits and stimulates the ligase activity of LigD. The chain is Non-homologous end joining protein Ku from Actinosynnema mirum (strain ATCC 29888 / DSM 43827 / JCM 3225 / NBRC 14064 / NCIMB 13271 / NRRL B-12336 / IMRU 3971 / 101).